The primary structure comprises 282 residues: Uracil-DNA glycosylase (282 aa).

The tract at residues 15–40 is disordered; it reads SAASKRKSASNTENIPEKVPAGNENQ. Aspartate 123 functions as the Proton acceptor in the catalytic mechanism.

Belongs to the uracil-DNA glycosylase (UDG) superfamily. UNG family.

The protein localises to the mitochondrion. The protein resides in the nucleus. The enzyme catalyses Hydrolyzes single-stranded DNA or mismatched double-stranded DNA and polynucleotides, releasing free uracil.. Its activity is regulated as follows. Inhibited by UGI, a B.subtilis bacteriophage PBS2 peptide inhibitor. Its function is as follows. Excises uracil residues from the DNA which can arise as a result of misincorporation of dUMP residues by DNA polymerase or due to deamination of cytosine. The protein is Uracil-DNA glycosylase of Caenorhabditis elegans.